Reading from the N-terminus, the 354-residue chain is Uroporphyrinogen decarboxylase (354 aa).

Residues R27–R31, D77, Y154, T209, and H327 contribute to the substrate site.

It belongs to the uroporphyrinogen decarboxylase family. As to quaternary structure, homodimer.

The protein localises to the cytoplasm. It catalyses the reaction uroporphyrinogen III + 4 H(+) = coproporphyrinogen III + 4 CO2. It functions in the pathway porphyrin-containing compound metabolism; protoporphyrin-IX biosynthesis; coproporphyrinogen-III from 5-aminolevulinate: step 4/4. Its function is as follows. Catalyzes the decarboxylation of four acetate groups of uroporphyrinogen-III to yield coproporphyrinogen-III. The polypeptide is Uroporphyrinogen decarboxylase (Klebsiella pneumoniae (strain 342)).